The sequence spans 103 residues: Large ribosomal subunit protein uL24 (103 aa).

Belongs to the universal ribosomal protein uL24 family. As to quaternary structure, part of the 50S ribosomal subunit.

Functionally, one of two assembly initiator proteins, it binds directly to the 5'-end of the 23S rRNA, where it nucleates assembly of the 50S subunit. In terms of biological role, one of the proteins that surrounds the polypeptide exit tunnel on the outside of the subunit. The sequence is that of Large ribosomal subunit protein uL24 from Lacticaseibacillus casei (strain BL23) (Lactobacillus casei).